The chain runs to 84 residues: RNA-binding protein Hfq (84 aa).

The Sm domain occupies 10-70 (DNVLNQVRKN…VSTIIPGKTL (61 aa)).

The protein belongs to the Hfq family. Homohexamer.

Its function is as follows. RNA chaperone that binds small regulatory RNA (sRNAs) and mRNAs to facilitate mRNA translational regulation in response to envelope stress, environmental stress and changes in metabolite concentrations. Also binds with high specificity to tRNAs. The protein is RNA-binding protein Hfq of Natranaerobius thermophilus (strain ATCC BAA-1301 / DSM 18059 / JW/NM-WN-LF).